The following is a 3661-amino-acid chain: Serine/threonine-protein kinase SMG1 (3661 aa).

Residues 1 to 11 (MSRRAPGSRLS) show a composition bias toward low complexity. Disordered stretches follow at residues 1 to 101 (MSRR…TYGR) and 116 to 144 (PEFTSVQHGSRALATKDMRKSQERSMSYS). The segment at 1 to 1977 (MSRRAPGSRL…GVLLQQHMYV (1977 aa)) is interaction with SMG8 and SMG9. Positions 26-35 (NDWQPRTDSA) are enriched in polar residues. Composition is skewed to basic and acidic residues over residues 69 to 86 (QRHDDTRVHADIQNDEKG) and 129 to 138 (ATKDMRKSQE). An N6-acetyllysine modification is found at lysine 173. The segment covering 1154 to 1165 (RNSASPKHSLNG) has biased composition (polar residues). The disordered stretch occupies residues 1154–1175 (RNSASPKHSLNGESRKTVLSKP). Positions 1283–1866 (RELQKSIEVQ…LYPAIVGTIS (584 aa)) constitute an FAT domain. The stretch at 1817 to 1852 (APWRGIIPQLFSRLNHPEVYVRQSICNLLCRVAQDS) is one HEAT repeat. Residues 1898-1919 (ECEGGSPPASQDSNKDEPKSGL) are disordered. A PI3K/PI4K catalytic domain is found at 2124-2463 (VGGTITILPT…MEREITRSLF (340 aa)). A G-loop region spans residues 2130–2136 (ILPTKTK). Positions 2332–2340 (GLGDRHLDN) are catalytic loop. The tract at residues 2352–2376 (HIDYNVCFEKGKSLRVPEKVPFRMT) is activation loop. A Phosphothreonine modification is found at threonine 3550. Phosphoserine is present on residues serine 3556 and serine 3570. Polar residues predominate over residues 3568–3579 (ATSADTPPSTVP). Residues 3568 to 3591 (ATSADTPPSTVPGTGKSVACSPKK) are disordered. Phosphothreonine is present on residues threonine 3573 and threonine 3577. One can recognise an FATC domain in the interval 3629-3661 (RRMSVAEQVDYVIKEATNLDNLAQLYEGWTAWV).

It belongs to the PI3/PI4-kinase family. Component of the SMG1C complex composed of SMG1, SMG8 and SMG9; the recruitment of SMG8 to SMG1 N-terminus induces a large conformational change in the SMG1 C-terminal head domain containing the catalytic domain. Component of the transient SURF (SMG1-UPF1-eRF1-eRF3) complex. Part of a complex composed of SMG1, DHX34 and UPF1; within the complex DHX34 acts as a scaffolding protein to facilitate SMG1 phosphorylation of UPF1. Interacts with PRKCI. Interacts with TELO2 and TTI1. Interacts with RUVBL1 and RUVBL2. Interacts with UPF2. Interacts with DHX34 (via C-terminus); the interaction is RNA-independent. It depends on Mn(2+) as a cofactor. Autophosphorylated. Widely expressed, with highest level in heart and skeletal muscle. Expressed in placenta, brain, lung and spleen, but not in liver.

Its subcellular location is the nucleus. The protein localises to the cytoplasm. The enzyme catalyses L-seryl-[protein] + ATP = O-phospho-L-seryl-[protein] + ADP + H(+). The catalysed reaction is L-threonyl-[protein] + ATP = O-phospho-L-threonyl-[protein] + ADP + H(+). Its activity is regulated as follows. Inhibited by caffeine, LY294002 and wortmannin. Functionally, serine/threonine protein kinase involved in both mRNA surveillance and genotoxic stress response pathways. Recognizes the substrate consensus sequence [ST]-Q. Plays a central role in nonsense-mediated decay (NMD) of mRNAs containing premature stop codons by phosphorylating UPF1/RENT1. Recruited by release factors to stalled ribosomes together with SMG8 and SMG9 (forming the SMG1C protein kinase complex), and UPF1 to form the transient SURF (SMG1-UPF1-eRF1-eRF3) complex. In EJC-dependent NMD, the SURF complex associates with the exon junction complex (EJC) through UPF2 and allows the formation of an UPF1-UPF2-UPF3 surveillance complex which is believed to activate NMD. Also acts as a genotoxic stress-activated protein kinase that displays some functional overlap with ATM. Can phosphorylate p53/TP53 and is required for optimal p53/TP53 activation after cellular exposure to genotoxic stress. Its depletion leads to spontaneous DNA damage and increased sensitivity to ionizing radiation (IR). May activate PRKCI but not PRKCZ. The protein is Serine/threonine-protein kinase SMG1 of Homo sapiens (Human).